Here is a 369-residue protein sequence, read N- to C-terminus: Variable large protein 7 (369 aa).

Positions 1–26 are cleaved as a signal peptide; it reads MRKRISAIINKLNISIIIMTVVLMIG. Cys27 carries N-palmitoyl cysteine lipidation. A lipid anchor (S-diacylglycerol cysteine) is attached at Cys27.

It belongs to the variable large protein (Vlp) family. Alpha subfamily.

The protein resides in the cell outer membrane. In terms of biological role, the Vlp and Vsp proteins are antigenically distinct proteins, only one vlp or vsp gene is transcriptionally active at any one time. Switching between these genes is a mechanism of host immune response evasion. This Borrelia hermsii protein is Variable large protein 7.